The sequence spans 311 residues: Glycine--tRNA ligase alpha subunit (311 aa).

Belongs to the class-II aminoacyl-tRNA synthetase family. Tetramer of two alpha and two beta subunits.

The protein resides in the cytoplasm. It carries out the reaction tRNA(Gly) + glycine + ATP = glycyl-tRNA(Gly) + AMP + diphosphate. This is Glycine--tRNA ligase alpha subunit from Rhizobium meliloti (strain 1021) (Ensifer meliloti).